We begin with the raw amino-acid sequence, 623 residues long: Protein Atg16l2 (623 aa).

Residues 64-79 (PKDAISTRHEDWREEV) are compositionally biased toward basic and acidic residues. The interval 64–93 (PKDAISTRHEDWREEVSGTGPDQVSSPASL) is disordered. The stretch at 116-229 (VKKSAALDTL…ANQALVSQEL (114 aa)) forms a coiled coil. 7 WD repeats span residues 338-377 (AHLSEVNAVCFGPNSSLLATGGADRLIHLWNVVGGRLEAN), 382-421 (GAGGSITSVDFDPSGSQVLAATYNQAAQLWKVGETQSKET), 424-458 (GHKDKVTAAKFKLTRHQAVTGSRDRTVKEWDLGRA), 459-502 (YCSR…CIQV), 504-543 (PVQGRVTSLHLSYDQLHLLSCSRDNTLKVIDLRISNIRQV), 550-589 (KCSSDWTKAVFSPDRSYALAGSSNGDLYIWDVNTGKLETS), and 593-623 (PHCTAVNAVAWCFSGNHVVSVDQGRKVVLWH).

This sequence belongs to the WD repeat ATG16 family. In terms of assembly, homooligomer. Heterooligomer with ATG16L2. Interacts with ATG5. Self-oligomerizes to form a 800-kDa complex composed of ATG12-ATG5 and ATG16L2. Interacts with RAB33B. Widely expressed.

Its subcellular location is the cytoplasm. The protein resides in the cytosol. In terms of biological role, may play a role in regulating epithelial homeostasis in an ATG16L1-dependent manner. This Mus musculus (Mouse) protein is Protein Atg16l2 (Atg16l2).